A 394-amino-acid chain; its full sequence is Elongation factor Tu (394 aa).

Residues 10–205 enclose the tr-type G domain; sequence KPHMNVGTIG…TMDNYFDLPQ (196 aa). The tract at residues 19 to 26 is G1; sequence GHVDHGKT. 19 to 26 is a GTP binding site; the sequence is GHVDHGKT. Thr26 provides a ligand contact to Mg(2+). Residues 61 to 65 are G2; that stretch reads GITIN. The interval 82-85 is G3; that stretch reads DCPG. GTP is bound by residues 82–86 and 137–140; these read DCPGH and NKLD. A G4 region spans residues 137 to 140; sequence NKLD. Residues 173-175 form a G5 region; that stretch reads SAF.

It belongs to the TRAFAC class translation factor GTPase superfamily. Classic translation factor GTPase family. EF-Tu/EF-1A subfamily. Monomer.

Its subcellular location is the cytoplasm. It carries out the reaction GTP + H2O = GDP + phosphate + H(+). Its function is as follows. GTP hydrolase that promotes the GTP-dependent binding of aminoacyl-tRNA to the A-site of ribosomes during protein biosynthesis. In Borrelia turicatae (strain 91E135), this protein is Elongation factor Tu.